A 131-amino-acid polypeptide reads, in one-letter code: D-ribose pyranase (131 aa).

Catalysis depends on histidine 20, which acts as the Proton donor. Substrate contacts are provided by residues aspartate 28, histidine 98, and 120–122 (YSN).

Belongs to the RbsD / FucU family. RbsD subfamily. In terms of assembly, homodecamer.

The protein localises to the cytoplasm. The enzyme catalyses beta-D-ribopyranose = beta-D-ribofuranose. The protein operates within carbohydrate metabolism; D-ribose degradation; D-ribose 5-phosphate from beta-D-ribopyranose: step 1/2. Functionally, catalyzes the interconversion of beta-pyran and beta-furan forms of D-ribose. This is D-ribose pyranase from Pediococcus pentosaceus (strain ATCC 25745 / CCUG 21536 / LMG 10740 / 183-1w).